Reading from the N-terminus, the 221-residue chain is Uracil-DNA glycosylase (221 aa).

The Proton acceptor role is filled by D65.

It belongs to the uracil-DNA glycosylase (UDG) superfamily. UNG family.

It localises to the cytoplasm. It carries out the reaction Hydrolyzes single-stranded DNA or mismatched double-stranded DNA and polynucleotides, releasing free uracil.. Excises uracil residues from the DNA which can arise as a result of misincorporation of dUMP residues by DNA polymerase or due to deamination of cytosine. The polypeptide is Uracil-DNA glycosylase (Flavobacterium johnsoniae (strain ATCC 17061 / DSM 2064 / JCM 8514 / BCRC 14874 / CCUG 350202 / NBRC 14942 / NCIMB 11054 / UW101) (Cytophaga johnsonae)).